Reading from the N-terminus, the 816-residue chain is MAMWQGAMDNRGFHQGSFSSFQSSSSDEDLMDIPGTAMDFSMRDDVPPLDREIEGNKSYNGGGIGSSNRIMDFLEEPIPGVGTYDDFNTIDWVREKSRDRDRHREITNKSKESTWALIHSVSDAFSGWLLMLLIGLLSGSLAGLIDISAHWMTDLKEGICTGGFWFNHEHCCWNSEHVTFEDRDKCPEWNSWSQLIISTDQGAFAYIVNYFMYVLWALLFAFLAVSLVKAFAPYACGSGIPEIKTILSGFIIRGYLGKWTLVIKTITLVLAVSSGLSLGKEGPLVHVACCCGNILCHCFNKYRKNEAKRREVLSAAAAAGVSVAFGAPIGGVLFSLEEVSYYFPLKTLWRSFFAALVAAFTLRSINPFGNSRLVLFYVEFHTPWHLFELVPFIVLGIFGGLWGALFIRTNIAWCRKRKTTQLGKYPVVEVLIVTAITAILAFPNEYTRMSTSELISELFNDCGLLDSSKLCDYENHFNTSKGGELPDRPAGVGVYSAMWQLALTLILKIVITIFTFGMKIPSGLFIPSMAVGAIAGRLLGVGMEQLAYYHHDWGIFNSWCSQGADCITPGLYAMVGAAACLGGVTRMTVSLVVIMFELTGGLEYIVPLMAAAMTSKWVADALGREGIYDAHIRLNGYPFLEAKEEFAHKTLAMDVMKPRRNDPLLTVLTQDSMTVEDVETIISETTYSGFPVVVSRESQRLVGFVLRRDLIISIENARKKQDGVVSTSIIYFTEHSPPMPPYTPPTLKLRNILDLSPFTVTDLTPMEIVVDIFRKLGLRQCLVTHNGRLLGIITKKDVLKHIAQMANQDPESILFN.

The Cytoplasmic segment spans residues Met-1 to Ala-124. The next 2 membrane-spanning stretches (helical) occupy residues Phe-125–Gly-162 and Val-208–Phe-231. The Selectivity filter part_1 motif lies at Gly-237–Pro-241. Chloride is bound at residue Ser-238. Positions Ile-240–Leu-247 form an intramembrane region, helical. 2 helical membrane-spanning segments follow: residues Leu-256–Gly-275 and Glu-281–Asn-300. A Selectivity filter part_2 motif is present at residues Gly-279 to Pro-283. 2 intramembrane regions (helical) span residues Val-312–Ala-324 and Pro-328–Leu-336. The next 5 membrane-spanning stretches (helical) occupy residues Leu-348–Asn-366, Leu-389–Cys-414, Leu-422–Phe-442, Met-498–Met-518, and Gly-523–Gly-542. The Selectivity filter part_3 motif lies at Gly-523–Pro-527. Phe-525 is a chloride binding site. The segment at residues Gly-570–Val-584 is an intramembrane region (helical). An intramembrane region (note=Loop between two helices) is located at residues Thr-585–Met-587. The helical intramembrane region spans Thr-588 to Thr-599. The note=Loop between two helices intramembrane region spans Gly-600 to Tyr-604. Residues Ile-605–Leu-622 form a helical membrane-spanning segment. Topologically, residues Gly-623–Asn-816 are cytoplasmic. Residue Tyr-628 coordinates chloride. CBS domains follow at residues Met-656–Lys-720 and Ile-752–Glu-811. Residues Thr-666, Tyr-687–Gly-689, and Thr-794–Asp-797 each bind ATP.

The protein belongs to the chloride channel (TC 2.A.49) family. ClC-5/CLCN5 subfamily. As to quaternary structure, interacts with NEDD4 and NEDD4L. Post-translationally, ubiquitinated by NEDD4L in the presence of albumin; which promotes endocytosis and proteasomal degradation. Kidney specific.

The protein resides in the golgi apparatus membrane. It is found in the endosome membrane. Its subcellular location is the cell membrane. It carries out the reaction 2 chloride(in) + H(+)(out) = 2 chloride(out) + H(+)(in). Its function is as follows. Proton-coupled chloride transporter. Functions as antiport system and exchanges chloride ions against protons. Important for normal acidification of the endosome lumen. May play an important role in renal tubular function. The CLC channel family contains both chloride channels and proton-coupled anion transporters that exchange chloride or another anion for protons. The absence of conserved gating glutamate residues is typical for family members that function as channels. This chain is H(+)/Cl(-) exchange transporter 5 (Clcn5), found in Rattus norvegicus (Rat).